Reading from the N-terminus, the 183-residue chain is MSRSKKTRKGGENSPKQQPRVKKQDRAEVTGKRAEKGNKSGSRHNEALIQAQAPQKKAAQKKDPRHGSKKPVALALPTTTEKSATPKVKQPKLTDEQKLLKLEEDPRLNQLLDMLEEGRNLSDADQKWLDQQLNKIEALMIKLGISDELEDEAPAKSKADSDDDLFDRFESGAELLKDYQDKF.

The tract at residues M1 to K101 is disordered. Basic and acidic residues-rich tracts occupy residues K22–E46 and K92–K101.

It belongs to the YihI family. Interacts with Der.

Functionally, a GTPase-activating protein (GAP) that modifies Der/EngA GTPase function. May play a role in ribosome biogenesis. In Shewanella oneidensis (strain ATCC 700550 / JCM 31522 / CIP 106686 / LMG 19005 / NCIMB 14063 / MR-1), this protein is Der GTPase-activating protein YihI.